Here is a 451-residue protein sequence, read N- to C-terminus: MSEQEIWKKVLEVAESEISKSTFNTFLKDTELKEIRDNVAIIFVIHEFYAEWLNSNYKEVIQTIMKDVIGYEVEPKFFTAEQLAELDETSRKSNTPSEPQRQIIEYGHEGTDQFNTHNTFDTFVIGPGNRFPHAASLAVAEAPAQAYNPLFIYGGVGLGKTHLMHAIGHHVLSNQPNAKVLYTSSEKFTNDFIKSIRNNEPEAFREKYRNIDVLLIDDIQFIQNKEQTQEEFFHTFNELHQNKKQIVISSDRPPKEIAKLEDRLRSRFEWGLIVDITPPDYETRMAILQKKIEEENLEIPAEALNYIANQIQSNIRELEGALTRLLAYSKLQGRPITTELAAEALKDIIQVPKSKKITIQDIQKVVGHYYNVRIEDFSAKKRTKSIAYPRQIAMYLSRELTDFSLPKIGEEFGGRDHTTVIHAHEKIAKDIKADTIFKQEVEDLEKEIRNQ.

The domain I, interacts with DnaA modulators stretch occupies residues 1 to 71 (MSEQEIWKKV…QTIMKDVIGY (71 aa)). Residues 71–112 (YEVEPKFFTAEQLAELDETSRKSNTPSEPQRQIIEYGHEGTD) are domain II. The domain III, AAA+ region stretch occupies residues 113–329 (QFNTHNTFDT…GALTRLLAYS (217 aa)). G157, G159, K160, and T161 together coordinate ATP. Residues 330-451 (KLQGRPITTE…EDLEKEIRNQ (122 aa)) are domain IV, binds dsDNA.

The protein belongs to the DnaA family. As to quaternary structure, oligomerizes as a right-handed, spiral filament on DNA at oriC.

It localises to the cytoplasm. Its function is as follows. Plays an essential role in the initiation and regulation of chromosomal replication. ATP-DnaA binds to the origin of replication (oriC) to initiate formation of the DNA replication initiation complex once per cell cycle. Binds the DnaA box (a 9 base pair repeat at the origin) and separates the double-stranded (ds)DNA. Forms a right-handed helical filament on oriC DNA; dsDNA binds to the exterior of the filament while single-stranded (ss)DNA is stabiized in the filament's interior. The ATP-DnaA-oriC complex binds and stabilizes one strand of the AT-rich DNA unwinding element (DUE), permitting loading of DNA polymerase. After initiation quickly degrades to an ADP-DnaA complex that is not apt for DNA replication. Binds acidic phospholipids. This Staphylococcus haemolyticus (strain JCSC1435) protein is Chromosomal replication initiator protein DnaA.